Here is an 85-residue protein sequence, read N- to C-terminus: MKTRGLKRQFEGTVVSDKMDKTVIVAVERLVKHQEYKKYVRRTAKFAAHDEQNQCAVGDKVIITESRPLSRTKHWRVVNVVEKAV.

The protein belongs to the universal ribosomal protein uS17 family. Part of the 30S ribosomal subunit.

Its function is as follows. One of the primary rRNA binding proteins, it binds specifically to the 5'-end of 16S ribosomal RNA. The protein is Small ribosomal subunit protein uS17 of Desulfosudis oleivorans (strain DSM 6200 / JCM 39069 / Hxd3) (Desulfococcus oleovorans).